The primary structure comprises 57 residues: Delta-elapitoxin-Cb1a (57 aa).

Cystine bridges form between Cys-3–Cys-22, Cys-15–Cys-36, Cys-40–Cys-49, and Cys-50–Cys-55.

The protein belongs to the three-finger toxin family. Short-chain subfamily. Expressed by the venom gland.

The protein resides in the secreted. Its function is as follows. This toxin shifts the voltage-dependence of Nav1.4/SCN4A activation to more hyperpolarised potentials, inhibits inactivation, and produces large ramp currents, consistent with its profound effects on contractile force in an isolated skeletal muscle preparation. This toxin produces large muscle contractions and fasciculations in the indirectly stimulated chick biventer cervicis nerve-muscle assay, which are significantly inhibited by the addition of the sodium channel antagonist tetrodotoxin. The sequence is that of Delta-elapitoxin-Cb1a from Calliophis bivirgatus (Blue Malaysian coral snake).